Consider the following 625-residue polypeptide: PTS system beta-glucoside-specific EIIBCA component (625 aa).

Residues 1–84 (MTELARKIVA…NSVAGLDEKA (84 aa)) form the PTS EIIB type-1 domain. At 1–99 (MTELARKIVA…NDDKGNLLNR (99 aa)) the chain is on the periplasmic side. Cysteine 24 serves as the catalytic Phosphocysteine intermediate; for EIIB activity. A helical transmembrane segment spans residues 100 to 120 (FVYVISGIFTPLIGLMAATGI). One can recognise a PTS EIIC type-1 domain in the interval 102–465 (YVISGIFTPL…RQPAQGAPQE (364 aa)). Topologically, residues 121 to 140 (LKGMLALALTFQWTTEQSGT) are cytoplasmic. Residues 141–161 (YLILFSASDALFWFFPIILGY) form a helical membrane-spanning segment. The Periplasmic segment spans residues 162 to 166 (TAGKR). Residues 167–187 (FGGNPFTAMVIGGALVHPLIL) traverse the membrane as a helical segment. The Cytoplasmic portion of the chain corresponds to 188 to 202 (TAFENGQKADALGLD). The chain crosses the membrane as a helical span at residues 203 to 223 (FLGIPVTLLNYSSSVIPIIFS). Topologically, residues 224-244 (AWLCSILERRLNAWLPSAIKN) are periplasmic. Residues 245-265 (FFTPLLCLMVITPVTFLLVGP) form a helical membrane-spanning segment. Residues 266 to 284 (LSTWISELIAAGYLWLYQA) lie on the Cytoplasmic side of the membrane. Residues 285–305 (VPAFAGAVMGGFWQIFVMFGL) traverse the membrane as a helical segment. Residues 306–324 (HWGLVPLCINNFTVLGYDT) lie on the Periplasmic side of the membrane. A helical membrane pass occupies residues 325-345 (MIPLLMPAIMAQVGAALGVFL). The Cytoplasmic segment spans residues 346-353 (CERDAQKK). The helical transmembrane segment at 354–374 (VVAGSAALTSLFGITEPAVYG) threads the bilayer. Topologically, residues 375 to 380 (VNLPRK) are periplasmic. Residues 381 to 401 (YPFVIACISGALGATIIGYAQ) form a helical membrane-spanning segment. The Cytoplasmic portion of the chain corresponds to 402–403 (TK). A helical membrane pass occupies residues 404–424 (VYSFGLPSIFTFMQTIPSTGI). The Periplasmic segment spans residues 425-431 (DFTVWAS). Residues 432 to 452 (VIGGVIAIGCAFVGTVMLHFI) form a helical membrane-spanning segment. At 453–625 (TAKRQPAQGA…AGEPLLSIIR (173 aa)) the chain is on the cytoplasmic side. In terms of domain architecture, PTS EIIA type-1 spans 495–599 (DTTFASGLLG…DLTTPVLISN (105 aa)). The active-site Tele-phosphohistidine intermediate; for EIIA activity is the histidine 547.

Its subcellular location is the cell inner membrane. In terms of biological role, the phosphoenolpyruvate-dependent sugar phosphotransferase system (sugar PTS), a major carbohydrate active -transport system, catalyzes the phosphorylation of incoming sugar substrates concomitantly with their translocation across the cell membrane. This system is involved in beta-glucoside transport. Acts both as a kinase and as a phosphatase on BglG. This Escherichia coli (strain K12) protein is PTS system beta-glucoside-specific EIIBCA component (bglF).